The chain runs to 375 residues: Trans-enoyl reductase BOA5 (375 aa).

Over residues 1 to 16 (MQAVIQTGPGTLQLTE) the composition is skewed to polar residues. Positions 1 to 21 (MQAVIQTGPGTLQLTENVPKP) are disordered. Residue 42 to 45 (SDWK) coordinates NADP(+). A substrate-binding site is contributed by 121–128 (VGIVTTGL). Positions 147 to 168 (GSAAPQKTRVGPRGWSGGDALT) are disordered. NADP(+)-binding positions include 185–188 (STST), 208–211 (SPHN), Y226, and 273–274 (LD). 294–298 (ALTIF) contacts substrate. An NADP(+)-binding site is contributed by 363 to 364 (VS).

It belongs to the zinc-containing alcohol dehydrogenase family. Monomer.

It participates in polyketide biosynthesis. Its function is as follows. Trans-enoyl reductase; part of the gene cluster A that mediates the biosynthesis of botcinic acid and its botcinin derivatives, acetate-derived polyketides that contribute to virulence when combined with the sesquiterpene botrydial. Botcinic acid and its derivatives have been shown to induce chlorosis and necrosis during host plant infection, but also have antifungal activities. Two polyketide synthases, BOA6 and BOA9, are involved in the biosynthesis of botcinins. BOA6 mediates the formation of the per-methylated tetraketide core by condensation of four units of malonyl-CoA with one unit of acetyl-CoA, which would be methylated in activated methylene groups to yield a bicyclic acid intermediate that could then either be converted to botrylactone derivatives or lose the starter acetate unit through a retro-Claisen type C-C bond cleavage to yield botcinin derivatives. The second polyketide synthase, BOA9, is probably required for the biosynthesis of the tetraketide side chain of botcinins. The methyltransferase (MT) domain within BOA6 is probably responsible for the incorporation of four methyl groups. The trans-enoyl reductase BOA5 might take over the enoyl reductase function of BOA6 that misses an ER domain. The monooxygenases BOA2, BOA3 and BOA4 might be involved in further hydroxylations at C4, C5 and C8, whereas BOA7, close to BOA9, could potentially be involved in the hydroxylation at C4 in the side chain of botcinins. This Botryotinia fuckeliana (strain B05.10) (Noble rot fungus) protein is Trans-enoyl reductase BOA5.